A 252-amino-acid chain; its full sequence is 3-deoxy-manno-octulosonate cytidylyltransferase (252 aa).

The protein belongs to the KdsB family.

It is found in the cytoplasm. It catalyses the reaction 3-deoxy-alpha-D-manno-oct-2-ulosonate + CTP = CMP-3-deoxy-beta-D-manno-octulosonate + diphosphate. The protein operates within nucleotide-sugar biosynthesis; CMP-3-deoxy-D-manno-octulosonate biosynthesis; CMP-3-deoxy-D-manno-octulosonate from 3-deoxy-D-manno-octulosonate and CTP: step 1/1. It functions in the pathway bacterial outer membrane biogenesis; lipopolysaccharide biosynthesis. Its function is as follows. Activates KDO (a required 8-carbon sugar) for incorporation into bacterial lipopolysaccharide in Gram-negative bacteria. This is 3-deoxy-manno-octulosonate cytidylyltransferase from Trichlorobacter lovleyi (strain ATCC BAA-1151 / DSM 17278 / SZ) (Geobacter lovleyi).